The following is a 443-amino-acid chain: Phosphoglucosamine mutase (443 aa).

Residue Ser100 is the Phosphoserine intermediate of the active site. Ser100, Asp240, Asp242, and Asp244 together coordinate Mg(2+). At Ser100 the chain carries Phosphoserine.

The protein belongs to the phosphohexose mutase family. Requires Mg(2+) as cofactor. Post-translationally, activated by phosphorylation.

It catalyses the reaction alpha-D-glucosamine 1-phosphate = D-glucosamine 6-phosphate. Its function is as follows. Catalyzes the conversion of glucosamine-6-phosphate to glucosamine-1-phosphate. The sequence is that of Phosphoglucosamine mutase from Carboxydothermus hydrogenoformans (strain ATCC BAA-161 / DSM 6008 / Z-2901).